Consider the following 176-residue polypeptide: Cytochrome b (176 aa).

3 helical membrane passes run 33–53 (FGSL…FLAM), 77–98 (WLLR…YLHI), and 113–133 (WNVG…GYVL). 2 residues coordinate heme b: His83 and His97.

Belongs to the cytochrome b family. The cytochrome bc1 complex contains 11 subunits: 3 respiratory subunits (MT-CYB, CYC1 and UQCRFS1), 2 core proteins (UQCRC1 and UQCRC2) and 6 low-molecular weight proteins (UQCRH/QCR6, UQCRB/QCR7, UQCRQ/QCR8, UQCR10/QCR9, UQCR11/QCR10 and a cleavage product of UQCRFS1). This cytochrome bc1 complex then forms a dimer. Requires heme b as cofactor.

The protein localises to the mitochondrion inner membrane. In terms of biological role, component of the ubiquinol-cytochrome c reductase complex (complex III or cytochrome b-c1 complex) that is part of the mitochondrial respiratory chain. The b-c1 complex mediates electron transfer from ubiquinol to cytochrome c. Contributes to the generation of a proton gradient across the mitochondrial membrane that is then used for ATP synthesis. The polypeptide is Cytochrome b (MT-CYB) (Nyctinomops aurispinosus (Peale's free-tailed bat)).